Here is a 486-residue protein sequence, read N- to C-terminus: Glutamyl-tRNA(Gln) amidotransferase subunit A (486 aa).

Catalysis depends on charge relay system residues lysine 80 and serine 155. The active-site Acyl-ester intermediate is the serine 179.

It belongs to the amidase family. GatA subfamily. Heterotrimer of A, B and C subunits.

The enzyme catalyses L-glutamyl-tRNA(Gln) + L-glutamine + ATP + H2O = L-glutaminyl-tRNA(Gln) + L-glutamate + ADP + phosphate + H(+). In terms of biological role, allows the formation of correctly charged Gln-tRNA(Gln) through the transamidation of misacylated Glu-tRNA(Gln) in organisms which lack glutaminyl-tRNA synthetase. The reaction takes place in the presence of glutamine and ATP through an activated gamma-phospho-Glu-tRNA(Gln). This chain is Glutamyl-tRNA(Gln) amidotransferase subunit A, found in Geobacillus sp. (strain WCH70).